A 1396-amino-acid chain; its full sequence is Melanoma inhibitory activity protein 2 (1396 aa).

Positions 1–22 (MAEVSVQRILLLVVSLAKCLEG) are cleaved as a signal peptide. Residues 23–604 (TKLLAHLKKC…YGFMSSALSP (582 aa)) are Lumenal-facing. Positions 39 to 101 (TLISRVLALR…PRDAVEIEEV (63 aa)) constitute an SH3 domain. Residue asparagine 59 is glycosylated (N-linked (GlcNAc...) asparagine). Disordered stretches follow at residues 197–288 (EGAG…VPDE) and 331–361 (ESNP…TDKE). A compositionally biased stretch (acidic residues) spans 243-258 (SDTEPTQELALEEESD). Asparagine 366 carries N-linked (GlcNAc...) asparagine glycosylation. Disordered regions lie at residues 396 to 421 (DKGE…PEKE) and 525 to 557 (PMEE…ELSV). The stretch at 605-625 (IEILLESVVAALPEDMRADFN) is an intramembrane region. The Lumenal segment spans residues 626 to 628 (PSG). Residues 629–649 (FSLELAVCVLSVGLLAVVLFL) traverse the membrane as a helical segment. Over 650 to 1396 (WRGFRSIRSR…AADPPETQEA (747 aa)) the chain is Cytoplasmic. The interval 651–1243 (RGFRSIRSRF…RSYNMPSLDK (593 aa)) is mediates interaction with MIA3. 2 coiled-coil regions span residues 693–867 (YEGL…LVTS) and 914–1082 (AAKL…NRQK). The disordered stretch occupies residues 1103–1396 (PNTAFGREHS…AADPPETQEA (294 aa)). Residues 1105–1396 (TAFGREHSPY…AADPPETQEA (292 aa)) are proline-rich domain (PRD); probably mediates interaction with COPII coat subunits. Over residues 1135–1146 (LLEGPLRLSPLL) the composition is skewed to low complexity. The span at 1165–1179 (MNTERGESSYDRLSD) shows a compositional bias: basic and acidic residues. Residues 1252-1269 (MESSGNGTKDNLGNSNVP) are compositionally biased toward polar residues. 2 stretches are compositionally biased toward pro residues: residues 1331–1342 (RDFPGPPLPPFP) and 1351–1368 (GFPP…PPPH).

Belongs to the MIA/OTOR family. In terms of assembly, interacts with MIA3. Interacts with the COPII coat subunits SEC23A, SEC23B and maybe SEC24C. Interacts with PREB; recruits PREB to endoplasmic reticulum exit sites. Interacts with APOB. In terms of tissue distribution, isoform 1 is expressed in liver (at protein level). Isoform 2 is highly expressed in liver and weakly in testis.

It localises to the endoplasmic reticulum membrane. In terms of biological role, plays a role in the transport of cargos that are too large to fit into COPII-coated vesicles and require specific mechanisms to be incorporated into membrane-bound carriers and exported from the endoplasmic reticulum. Plays a role in the secretion of lipoproteins, pre-chylomicrons and pre-VLDLs, by participating in their export from the endoplasmic reticulum. Thereby, may play a role in cholesterol and triglyceride homeostasis. Required for collagen VII (COL7A1) secretion by loading COL7A1 into transport carriers and recruiting PREB/SEC12 at the endoplasmic reticulum exit sites. The sequence is that of Melanoma inhibitory activity protein 2 from Mus musculus (Mouse).